A 299-amino-acid polypeptide reads, in one-letter code: GTPase Era (299 aa).

The Era-type G domain maps to 4-171; it reads KSGFVAILGR…VDILSENLEE (168 aa). The tract at residues 12–19 is G1; the sequence is GRPNVGKS. Position 12-19 (12-19) interacts with GTP; that stretch reads GRPNVGKS. The interval 38-42 is G2; it reads QTTRN. Residues 59 to 62 form a G3 region; that stretch reads DTPG. GTP is bound by residues 59-63 and 121-124; these read DTPGI and NKID. Residues 121 to 124 form a G4 region; sequence NKID. The segment at 150–152 is G5; it reads ISA. The KH type-2 domain maps to 202 to 280; sequence TREEIPHSVA…FLETWVKVKK (79 aa).

It belongs to the TRAFAC class TrmE-Era-EngA-EngB-Septin-like GTPase superfamily. Era GTPase family. Monomer.

Its subcellular location is the cytoplasm. It is found in the cell membrane. An essential GTPase that binds both GDP and GTP, with rapid nucleotide exchange. Plays a role in 16S rRNA processing and 30S ribosomal subunit biogenesis and possibly also in cell cycle regulation and energy metabolism. The chain is GTPase Era from Streptococcus gordonii (strain Challis / ATCC 35105 / BCRC 15272 / CH1 / DL1 / V288).